Consider the following 251-residue polypeptide: Regulator of G-protein signaling 9-binding protein B (251 aa).

The Cytoplasmic portion of the chain corresponds to 1–230 (MPLQNVKVAD…NSKGCCSDGQ (230 aa)). Coiled coils occupy residues 52–94 (HLRD…ELER) and 158–187 (ANKA…MKVN). The helical; Anchor for type IV membrane protein transmembrane segment at 231 to 250 (LIVFLLLCGTALVAITLYSI) threads the bilayer. Position 251 (Leu251) is a topological domain, extracellular.

This sequence belongs to the RGS7BP/RGS9BP family.

Its subcellular location is the membrane. Regulator of G protein-coupled receptor (GPCR) signaling. Probably acts by regulating the activity of some 'R7' family protein (RGS6, RGS7, RGS9 and/or RGS11). The polypeptide is Regulator of G-protein signaling 9-binding protein B (rgs9bp-b) (Xenopus laevis (African clawed frog)).